A 582-amino-acid polypeptide reads, in one-letter code: SUMO-activating enzyme subunit uba-2 (582 aa).

ATP-binding positions include 20-25, Asp-44, 52-55, Lys-68, 91-92, and 113-118; these read GAGGIG, NLNR, SI, and DNRAAR. The Zn(2+) site is built by Cys-154 and Cys-157. The active-site Glycyl thioester intermediate is Cys-170. Over residues 204-214 the composition is skewed to acidic residues; the sequence is SPDMDAVDPDN. The interval 204 to 235 is disordered; the sequence is SPDMDAVDPDNTEAVTTEKEKEAMKEEPAPVG. Residues 219–231 are compositionally biased toward basic and acidic residues; the sequence is TTEKEKEAMKEEP. Positions 431 and 434 each coordinate Zn(2+). Over residues 531 to 570 the composition is skewed to basic and acidic residues; it reads FEVARSEKEPEPDDRKRKADGSEEPEAKRQKVEEKDDKNG. The disordered stretch occupies residues 531–582; sequence FEVARSEKEPEPDDRKRKADGSEEPEAKRQKVEEKDDKNGNEAVAEITETMA.

This sequence belongs to the ubiquitin-activating E1 family. Heterodimer with aos-1.

Its pathway is protein modification; protein sumoylation. Its function is as follows. The dimeric enzyme acts as an E1 ligase for smo-1. It mediates ATP-dependent activation of smo-1 and formation of a thioester with a conserved cysteine residue on uba-2. This Caenorhabditis elegans protein is SUMO-activating enzyme subunit uba-2 (uba-2).